A 188-amino-acid chain; its full sequence is dCTP deaminase (188 aa).

DCTP is bound by residues 111-116, 135-137, glutamine 156, tyrosine 170, and glutamine 180; these read KSTYAR and TLE. Glutamate 137 acts as the Proton donor/acceptor in catalysis.

This sequence belongs to the dCTP deaminase family. As to quaternary structure, homotrimer.

The enzyme catalyses dCTP + H2O + H(+) = dUTP + NH4(+). Its pathway is pyrimidine metabolism; dUMP biosynthesis; dUMP from dCTP (dUTP route): step 1/2. In terms of biological role, catalyzes the deamination of dCTP to dUTP. The protein is dCTP deaminase of Pseudomonas putida (strain ATCC 700007 / DSM 6899 / JCM 31910 / BCRC 17059 / LMG 24140 / F1).